The sequence spans 356 residues: S-adenosylmethionine:tRNA ribosyltransferase-isomerase (356 aa).

Belongs to the QueA family. In terms of assembly, monomer.

It localises to the cytoplasm. It carries out the reaction 7-aminomethyl-7-carbaguanosine(34) in tRNA + S-adenosyl-L-methionine = epoxyqueuosine(34) in tRNA + adenine + L-methionine + 2 H(+). The protein operates within tRNA modification; tRNA-queuosine biosynthesis. Transfers and isomerizes the ribose moiety from AdoMet to the 7-aminomethyl group of 7-deazaguanine (preQ1-tRNA) to give epoxyqueuosine (oQ-tRNA). The protein is S-adenosylmethionine:tRNA ribosyltransferase-isomerase of Escherichia coli O6:H1 (strain CFT073 / ATCC 700928 / UPEC).